A 186-amino-acid polypeptide reads, in one-letter code: uncharacterized protein (186 aa).

The signal sequence occupies residues 1 to 28; that stretch reads MSVKPAALFRISAALAVAGLGASLIASA.

This is an uncharacterized protein from Rhizobium meliloti (strain 1021) (Ensifer meliloti).